Here is a 105-residue protein sequence, read N- to C-terminus: Small ribosomal subunit protein eS26 (105 aa).

The protein belongs to the eukaryotic ribosomal protein eS26 family. Component of the small ribosomal subunit.

The protein resides in the cytoplasm. The sequence is that of Small ribosomal subunit protein eS26 (RPS26) from Encephalitozoon cuniculi (strain GB-M1) (Microsporidian parasite).